Here is a 411-residue protein sequence, read N- to C-terminus: Peptide chain release factor subunit 1 (411 aa).

Belongs to the eukaryotic release factor 1 family. Heterodimer of two subunits, one of which binds GTP.

The protein localises to the cytoplasm. Directs the termination of nascent peptide synthesis (translation) in response to the termination codons UAA, UAG and UGA. The protein is Peptide chain release factor subunit 1 of Methanosphaera stadtmanae (strain ATCC 43021 / DSM 3091 / JCM 11832 / MCB-3).